Consider the following 407-residue polypeptide: Inhibin beta B chain (407 aa).

An N-terminal signal peptide occupies residues 1–28; that stretch reads MDGLPGRALGAACLLLLAAGWLGPEAWG. The segment at 27 to 60 is disordered; the sequence is WGSPTPPPSPAAPPPPPPPGALGGSQDTCTSCGG. A propeptide spanning residues 29–292 is cleaved from the precursor; that stretch reads SPTPPPSPAA…VDSRHRIRKR (264 aa). Residues 30 to 46 show a composition bias toward pro residues; it reads PTPPPSPAAPPPPPPPG. Asparagine 93 carries an N-linked (GlcNAc...) asparagine glycan. Cystine bridges form between cysteine 296–cysteine 304, cysteine 303–cysteine 372, cysteine 332–cysteine 404, and cysteine 336–cysteine 406.

The protein belongs to the TGF-beta family. As to quaternary structure, dimeric, linked by one or more disulfide bonds. Inhibin B is a dimer of alpha and beta-B. Activin B is a homodimer of beta-B. Activin AB is a dimer of beta-A and beta-B. Interacts with FST and FSTL3.

It is found in the secreted. Its function is as follows. Inhibins and activins inhibit and activate, respectively, the secretion of follitropin by the pituitary gland. Inhibins/activins are involved in regulating a number of diverse functions such as hypothalamic and pituitary hormone secretion, gonadal hormone secretion, germ cell development and maturation, erythroid differentiation, insulin secretion, nerve cell survival, embryonic axial development or bone growth, depending on their subunit composition. Inhibins appear to oppose the functions of activins. In terms of biological role, activin B is a dimer of alpha and beta-B that plays a role in several essential biological processes including embryonic development, stem cell maintenance and differentiation, haematopoiesis, cell proliferation and wound healing. Signals through type I receptor ACVR1C, abundantly expressed in pancreatic beta cells, and type II receptors like ACVR2A. Upon ligand binding, these receptors phosphorylate intracellular signaling mediators SMAD2 and SMAD3, which form a complex with SMAD4, translocate to the nucleus, and regulate gene expression. Plays a crucial role in the induction of hepcidin by inflammation through activation of ACVR1C and subsequent phosphorylation of SMAD1/5/8. Regulates adipocyte lipid metabolism by decreasing non-esterified fatty acids and glycerol release and increases intracellular triglyceride content. Stimulates wound healing by promoting cell migration and hair follicle regeneration through the JNK and ERK signaling pathways downstream of RHOA. Inhibin B is a dimer of alpha and beta-B that plays a crucial role in the regulation of the reproductive system by inhibiting the secretion of follicle-stimulating hormone (FSH) from the anterior pituitary gland. Thereby, maintains reproductive homeostasis in both males and females. Acts as a more potent suppressor of FSH release than inhibin A. Functions as competitive receptor antagonist binding activin type II receptors with high affinity in the presence of the TGF-beta type III coreceptor/TGFBR3L. This is Inhibin beta B chain (INHBB) from Sus scrofa (Pig).